The primary structure comprises 241 residues: Beta-nerve growth factor (241 aa).

A signal peptide spans 1-18 (MSMLFYTLITAFLIGVQA). Positions 19 to 121 (EPYTDSNVPE…PFNRTHRSKR (103 aa)) are excised as a propeptide. Asn-69 and Asn-114 each carry an N-linked (GlcNAc...) asparagine glycan. 3 disulfides stabilise this stretch: Cys-136/Cys-201, Cys-179/Cys-229, and Cys-189/Cys-231. A 1-acyl-sn-glycero-3-phospho-(1D-myo-inositol) is bound by residues Arg-171, Tyr-173, and Lys-209. Residue Arg-171 participates in a 1-acyl-sn-glycero-3-phospho-L-serine binding. Lys-209 is a binding site for a 1-acyl-sn-glycero-3-phospho-L-serine.

This sequence belongs to the NGF-beta family. In terms of assembly, homodimer. The homodimer interacts with a single NTRK1 chain. The homodimer interacts with a single NGFR chain. The NGF dimer interacts with a single SORCS2 chain (via extracellular domain). The NGF precursor (proNGF) binds to a receptor complex formed by SORT1 and NGFR, which leads to NGF endocytosis. Both mature NGF and the immature NGF precursor (proNGF) interact with SORCS2 and with the heterodimer formed by SORCS2 and NGFR (via extracellular domains). The NGF precursor (proNGF) has much higher affinity for SORCS2 than mature NGF. The NGF precursor (proNGF) has much higher affinity for SORT1 than mature NGF. Interacts with ADAM10 in a divalent cation-dependent manner. Interacts with SORCS3. As to expression, detected in submaxillary gland (at protein level). Highly expressed in male submaxillary gland. Levels are much lower in female submaxillary gland.

It is found in the secreted. The protein resides in the endosome lumen. Nerve growth factor is important for the development and maintenance of the sympathetic and sensory nervous systems. Extracellular ligand for the NTRK1 and NGFR receptors, activates cellular signaling cascades to regulate neuronal proliferation, differentiation and survival. The immature NGF precursor (proNGF) functions as a ligand for the heterodimeric receptor formed by SORCS2 and NGFR, and activates cellular signaling cascades that lead to inactivation of RAC1 and/or RAC2, reorganization of the actin cytoskeleton and neuronal growth cone collapse. In contrast to mature NGF, the precursor form (proNGF) promotes neuronal apoptosis (in vitro). Inhibits metalloproteinase-dependent proteolysis of platelet glycoprotein VI. Binds lysophosphatidylinositol and lysophosphatidylserine between the two chains of the homodimer. The lipid-bound form promotes histamine relase from mast cells, contrary to the lipid-free form. The chain is Beta-nerve growth factor (Ngf) from Mus musculus (Mouse).